A 215-amino-acid polypeptide reads, in one-letter code: Large ribosomal subunit protein uL4 (215 aa).

The interval A43–Q100 is disordered.

The protein belongs to the universal ribosomal protein uL4 family. As to quaternary structure, part of the 50S ribosomal subunit.

One of the primary rRNA binding proteins, this protein initially binds near the 5'-end of the 23S rRNA. It is important during the early stages of 50S assembly. It makes multiple contacts with different domains of the 23S rRNA in the assembled 50S subunit and ribosome. Functionally, forms part of the polypeptide exit tunnel. This chain is Large ribosomal subunit protein uL4, found in Mycolicibacterium smegmatis (Mycobacterium smegmatis).